The chain runs to 118 residues: Large ribosomal subunit protein uL18 (118 aa).

Residues 1–24 (MISKPDKNKIRQKRHRRVRGKLSG) form a disordered region. Over residues 10 to 20 (IRQKRHRRVRG) the composition is skewed to basic residues.

It belongs to the universal ribosomal protein uL18 family. Part of the 50S ribosomal subunit; part of the 5S rRNA/L5/L18/L25 subcomplex. Contacts the 5S and 23S rRNAs.

Functionally, this is one of the proteins that bind and probably mediate the attachment of the 5S RNA into the large ribosomal subunit, where it forms part of the central protuberance. In Streptococcus agalactiae serotype III (strain NEM316), this protein is Large ribosomal subunit protein uL18.